Here is a 428-residue protein sequence, read N- to C-terminus: Kynureninase (428 aa).

Residues Thr-104, Thr-105, 132–135 (FPSD), Asp-213, His-216, and Tyr-238 contribute to the pyridoxal 5'-phosphate site. At Lys-239 the chain carries N6-(pyridoxal phosphate)lysine. Positions 267 and 295 each coordinate pyridoxal 5'-phosphate.

The protein belongs to the kynureninase family. Homodimer. Pyridoxal 5'-phosphate is required as a cofactor.

It carries out the reaction L-kynurenine + H2O = anthranilate + L-alanine + H(+). It catalyses the reaction 3-hydroxy-L-kynurenine + H2O = 3-hydroxyanthranilate + L-alanine + H(+). It participates in amino-acid degradation; L-kynurenine degradation; L-alanine and anthranilate from L-kynurenine: step 1/1. The protein operates within cofactor biosynthesis; NAD(+) biosynthesis; quinolinate from L-kynurenine: step 2/3. Its function is as follows. Catalyzes the cleavage of L-kynurenine (L-Kyn) and L-3-hydroxykynurenine (L-3OHKyn) into anthranilic acid (AA) and 3-hydroxyanthranilic acid (3-OHAA), respectively. This is Kynureninase from Bacillus cereus (strain ZK / E33L).